We begin with the raw amino-acid sequence, 374 residues long: Methylthioribose-1-phosphate isomerase (374 aa).

D251 functions as the Proton donor in the catalytic mechanism.

The protein belongs to the eIF-2B alpha/beta/delta subunits family. MtnA subfamily.

It is found in the cytoplasm. It localises to the nucleus. The catalysed reaction is 5-(methylsulfanyl)-alpha-D-ribose 1-phosphate = 5-(methylsulfanyl)-D-ribulose 1-phosphate. Its pathway is amino-acid biosynthesis; L-methionine biosynthesis via salvage pathway; L-methionine from S-methyl-5-thio-alpha-D-ribose 1-phosphate: step 1/6. Catalyzes the interconversion of methylthioribose-1-phosphate (MTR-1-P) into methylthioribulose-1-phosphate (MTRu-1-P). This Oryza sativa subsp. indica (Rice) protein is Methylthioribose-1-phosphate isomerase.